The chain runs to 641 residues: MDSFNYCVQCNPEENWLELEFRSENDEPIDGLLVTITNQSAPSNTYTQTTSSGKVLFGKIAAGEWRASVSQASLLTEVEKYASRKEGQESPVKKRAAAELDAADKDTKQYRFTTIGDFWDEAPKDEFLQKQHKGIDVNASAEKAGFRLSHNQTYVFEIKALRSYMPVIIDTDEFNLVNSYTFALLSKLAYATNDFNRDDGKTIDNQGAISTVISQLKRKERPTYSGDLQAKWLLEEIPYSKALSAQYYAEDDVGSEGYIIFNDELAIIGVRGTEPYFQSKKPPVDNTKFKIIKAASGMAAVIADKIESATDSPGMKDLIITDLDAAQIAPEEFGGTYVHRGFYQYTMALLSLMEKDLGLHKIKKFYCCGHSLGGAGALLISALIKDSYHPPVLRLYTYGMPRVGTRSFVERYQNILHYRHVNNHDLVPQIPTVWMNTDVSEGFHVLDVFKSRVDLMRKMLTDDDDDNYQHHGHLSQLLTYNSNNQVLLTPKQTQVTMLDLANLATNDSVAMVDGLSDASIVEHGMEQYIPNLFEQLTALSDESLMVHYQRAISALEQEIATLQQSYLTVKQAWIESIGNGTPTMNIGRLMSEMHSINKLIENRNKIRGELRQIVSDPQRMPATKFLISQQTLPDEIKVQIR.

Interacts with VgrG3; this interaction allows TseL secretion to target cells.

It is found in the secreted. In terms of biological role, toxin secreted by the type VI (T6SS) secretion system that acts on prokaryotic as well as eukaryotic target cells. The protein is Toxin TseL of Vibrio cholerae serotype O1 (strain ATCC 39315 / El Tor Inaba N16961).